Reading from the N-terminus, the 51-residue chain is Suberization-associated anionic peroxidase 1 (51 aa).

His-30 is a heme binding site. A Ca(2+)-binding site is contributed by Thr-31.

The protein belongs to the peroxidase family. Classical plant (class III) peroxidase subfamily. The cofactor is heme b. Requires Ca(2+) as cofactor.

The protein resides in the secreted. The enzyme catalyses 2 a phenolic donor + H2O2 = 2 a phenolic radical donor + 2 H2O. Its function is as follows. Removal of H(2)O(2), oxidation of toxic reductants, biosynthesis and degradation of lignin, suberization, auxin catabolism, response to environmental stresses such as wounding, pathogen attack and oxidative stress. These functions might be dependent on each isozyme/isoform in each plant tissue. Suggested to catalyze the deposition of the aromatic residues of suberin on the cell wall and thus play a role in cell-suberization. The polypeptide is Suberization-associated anionic peroxidase 1 (Capsicum annuum (Capsicum pepper)).